The sequence spans 262 residues: MAAPGEALTSSSYITHHLTNLAVGDGGFWTVHIDSLFFSVLTGLAFILVFHSVAKKATSGVPSKLQCFVEMLVEFVDNSVKETFHGRNPLIAPLGLTIFCWIMLMNIMDLIPIDFIPYAAEHALGIPYLKIVPTADVNITMAMALGVFALMLYYSVKVKGLGGFAKELALHPFNHPIMIPFNLLLEVVSLIAKPISLGMRLFGNMFAGEVVFILIAALMPWWAQWLGSVPWAIFHILIITIQAFVFMMLTIVYLAQAHEDNH.

The next 5 helical transmembrane spans lie at 30-50, 91-111, 131-151, 201-221, and 232-252; these read TVHI…ILVF, IAPL…MDLI, IVPT…FALM, LFGN…LMPW, and AIFH…LTIV.

This sequence belongs to the ATPase A chain family. As to quaternary structure, F-type ATPases have 2 components, CF(1) - the catalytic core - and CF(0) - the membrane proton channel. CF(1) has five subunits: alpha(3), beta(3), gamma(1), delta(1), epsilon(1). CF(0) has three main subunits: a(1), b(2) and c(9-12). The alpha and beta chains form an alternating ring which encloses part of the gamma chain. CF(1) is attached to CF(0) by a central stalk formed by the gamma and epsilon chains, while a peripheral stalk is formed by the delta and b chains.

It is found in the cell inner membrane. Its function is as follows. Key component of the proton channel; it plays a direct role in the translocation of protons across the membrane. The sequence is that of ATP synthase subunit a 1 from Photobacterium profundum (strain SS9).